The chain runs to 495 residues: Lysine--tRNA ligase (495 aa).

Mg(2+) is bound by residues Glu-406 and Glu-413.

This sequence belongs to the class-II aminoacyl-tRNA synthetase family. In terms of assembly, homodimer. Mg(2+) serves as cofactor.

The protein resides in the cytoplasm. It carries out the reaction tRNA(Lys) + L-lysine + ATP = L-lysyl-tRNA(Lys) + AMP + diphosphate. The polypeptide is Lysine--tRNA ligase (Leptospira interrogans serogroup Icterohaemorrhagiae serovar copenhageni (strain Fiocruz L1-130)).